The following is a 440-amino-acid chain: 2-methylisoborneol synthase (440 aa).

Positions 1–116 (MPDSGPLGPH…SPAPAEPAAG (116 aa)) are disordered. Residues 17-27 (TPATTVPDAPA) are compositionally biased toward low complexity. The span at 48–58 (PPVPIPSPSPP) shows a compositional bias: pro residues. Residues 59 to 75 (SGSASAAADTPDATTVG) show a composition bias toward low complexity. Pro residues predominate over residues 102–111 (PSLPGSPAPA). Positions 197, 198, 202, 345, 349, and 353 each coordinate Mg(2+).

Belongs to the terpene synthase family. 2-methylisoborneol synthase subfamily. The cofactor is Mg(2+).

The catalysed reaction is (E)-2-methylgeranyl diphosphate + H2O = 2-methylisoborneol + diphosphate. Functionally, catalyzes the cyclization of 2-methylgeranyl diphosphate (2-MeGPP) to 2-methylisoborneol (2-MIB), which likely involves the intermediacy of 2-methyllinalyl diphosphate. This Streptomyces ambofaciens (strain ATCC 23877 / 3486 / DSM 40053 / JCM 4204 / NBRC 12836 / NRRL B-2516) protein is 2-methylisoborneol synthase.